A 335-amino-acid chain; its full sequence is Holliday junction branch migration complex subunit RuvB (335 aa).

Residues 4 to 183 (ADNLNVTSII…FGIVQRLEFY (180 aa)) are large ATPase domain (RuvB-L). ATP-binding positions include R23, G64, K67, T68, T69, 130-132 (EDY), R173, Y183, and R220. Residue T68 participates in Mg(2+) binding. Residues 184–254 (PTKDLQNIIS…VAMNALNMLN (71 aa)) are small ATPAse domain (RuvB-S). The tract at residues 257–335 (TAGFNFMDRQ…HFSLKQSRDI (79 aa)) is head domain (RuvB-H). DNA is bound by residues R293, R312, and R317.

Belongs to the RuvB family. As to quaternary structure, homohexamer. Forms an RuvA(8)-RuvB(12)-Holliday junction (HJ) complex. HJ DNA is sandwiched between 2 RuvA tetramers; dsDNA enters through RuvA and exits via RuvB. An RuvB hexamer assembles on each DNA strand where it exits the tetramer. Each RuvB hexamer is contacted by two RuvA subunits (via domain III) on 2 adjacent RuvB subunits; this complex drives branch migration. In the full resolvosome a probable DNA-RuvA(4)-RuvB(12)-RuvC(2) complex forms which resolves the HJ.

The protein resides in the cytoplasm. It carries out the reaction ATP + H2O = ADP + phosphate + H(+). Functionally, the RuvA-RuvB-RuvC complex processes Holliday junction (HJ) DNA during genetic recombination and DNA repair, while the RuvA-RuvB complex plays an important role in the rescue of blocked DNA replication forks via replication fork reversal (RFR). RuvA specifically binds to HJ cruciform DNA, conferring on it an open structure. The RuvB hexamer acts as an ATP-dependent pump, pulling dsDNA into and through the RuvAB complex. RuvB forms 2 homohexamers on either side of HJ DNA bound by 1 or 2 RuvA tetramers; 4 subunits per hexamer contact DNA at a time. Coordinated motions by a converter formed by DNA-disengaged RuvB subunits stimulates ATP hydrolysis and nucleotide exchange. Immobilization of the converter enables RuvB to convert the ATP-contained energy into a lever motion, pulling 2 nucleotides of DNA out of the RuvA tetramer per ATP hydrolyzed, thus driving DNA branch migration. The RuvB motors rotate together with the DNA substrate, which together with the progressing nucleotide cycle form the mechanistic basis for DNA recombination by continuous HJ branch migration. Branch migration allows RuvC to scan DNA until it finds its consensus sequence, where it cleaves and resolves cruciform DNA. The protein is Holliday junction branch migration complex subunit RuvB of Baumannia cicadellinicola subsp. Homalodisca coagulata.